We begin with the raw amino-acid sequence, 148 residues long: Large ribosomal subunit protein bL9 (148 aa).

This sequence belongs to the bacterial ribosomal protein bL9 family.

Binds to the 23S rRNA. The sequence is that of Large ribosomal subunit protein bL9 from Caldicellulosiruptor bescii (strain ATCC BAA-1888 / DSM 6725 / KCTC 15123 / Z-1320) (Anaerocellum thermophilum).